Here is a 415-residue protein sequence, read N- to C-terminus: Polyketide biosynthesis malonyl-ACP decarboxylase PksF (415 aa).

Positions 6–407 constitute a Ketosynthase family 3 (KS3) domain; it reads LPEVVVTGVG…GMNTAVCIQN (402 aa).

This sequence belongs to the thiolase-like superfamily. Beta-ketoacyl-ACP synthases family.

Its subcellular location is the cytoplasm. It carries out the reaction malonyl-[ACP] + H(+) = acetyl-[ACP] + CO2. It participates in antibiotic biosynthesis; bacillaene biosynthesis. Its function is as follows. Involved in some intermediate steps for the synthesis of the antibiotic polyketide bacillaene which is involved in secondary metabolism. It decarboxylates selectively the malonyl group attached on the acyl-carrier-protein AcpK (Mal-AcpK). This Bacillus subtilis (strain 168) protein is Polyketide biosynthesis malonyl-ACP decarboxylase PksF (pksF).